The chain runs to 505 residues: MTRILVQRGSSGSSSNSSRPSSSSSSSSGSETQINNNIPVPPVTIDEEITDEKQEEVTVVEKAECSDAKDVAVDSDEPADREDDEGLVVAENVHVQSEGIDCDSPVSGGSNSDSPPVPAPPPKPSSTVNPGSNRSVLGSFGALRIGPTRRAAGPRSLVSSRSSPTGSHPSSPRSHSENEGYNSSDEHMPCYVPSHPGSGLEREHQFEAEIRYSKGFEIRRMLEDGNCLFRAVADQVYGDSEAYDLARQMCMDYMEQERDHFSQFITEGFTSYLKRKRRDKVYGNNVEIQALAEMYNRPIHIYSYSTEPINIFQGNYSTDTPPIRLSYHHGNHYNSLVDPHRLTVGAGLGFSSLSGRHVDKEQVKAAIKAQQEHQIDNALLAEGRFYSDLELTEKEIERSVMEASRAEYLMEWSKPRIGPKESSTSNAETSSSGARPSGSDSKPAEAVKEKTVLSSSIEMVLSMGFSYAQAMEAYSIFGDDVDSMVCYVLETSCGGNNRRKGKATE.

The disordered stretch occupies residues 1–191; that stretch reads MTRILVQRGS…NSSDEHMPCY (191 aa). Positions 9–30 are enriched in low complexity; the sequence is GSSGSSSNSSRPSSSSSSSSGS. Residues 51–72 show a composition bias toward basic and acidic residues; that stretch reads DEKQEEVTVVEKAECSDAKDVA. Acidic residues predominate over residues 73 to 86; that stretch reads VDSDEPADREDDEG. Over residues 115–124 the composition is skewed to pro residues; that stretch reads PPVPAPPPKP. Residues 159–173 are compositionally biased toward low complexity; the sequence is SSRSSPTGSHPSSPR. Positions 174–188 are enriched in basic and acidic residues; it reads SHSENEGYNSSDEHM. The 124-residue stretch at 216 to 339 folds into the OTU domain; that stretch reads FEIRRMLEDG…GNHYNSLVDP (124 aa). D224 is a catalytic residue. The Nucleophile role is filled by C227. H332 is an active-site residue. Residues 416-447 form a disordered region; sequence RIGPKESSTSNAETSSSGARPSGSDSKPAEAV. The span at 421-441 shows a compositional bias: low complexity; it reads ESSTSNAETSSSGARPSGSDS. One can recognise a UBA domain in the interval 446–491; sequence AVKEKTVLSSSIEMVLSMGFSYAQAMEAYSIFGDDVDSMVCYVLET.

This sequence belongs to the peptidase C85 family. In terms of assembly, interacts with KDM1C. Mostly expressed in stems flowers and siliques, and, to a lower extent, in leaves, roots and seedlings.

The protein resides in the nucleus. It is found in the cytoplasm. It carries out the reaction Thiol-dependent hydrolysis of ester, thioester, amide, peptide and isopeptide bonds formed by the C-terminal Gly of ubiquitin (a 76-residue protein attached to proteins as an intracellular targeting signal).. In terms of biological role, hydrolase that can remove conjugated ubiquitin from proteins in vitro and may therefore play an important regulatory role at the level of protein turnover by preventing degradation. Binds chromatin (e.g. nucleosomes and histones) and has enzymatic histone deubiquitinase activity, specific for the H2B histone. Can both repress (e.g. OSR2) and promote (e.g. AN3) the expression of target genes by associating with chromatin, deubiquitinating H2B and regulating its euchromatic histone marks (e.g. H3ac and H3K4me). In association with LDL1/KDM1C, involved in transcriptional gene repression via histone deubiquitination and demethylation. Promotes the concerted epigenetic regulation and repression (e.g. the removal of euchromatic histone acetylation, ubiquitination, and methylation marks) of a set of genes (e.g. GA20OX, WUS, OSR2, ARL and ABI5) that collectively limit plant growth thus stimulating plant growth and increasing cell size. This Arabidopsis thaliana (Mouse-ear cress) protein is OVARIAN TUMOR DOMAIN-containing deubiquitinating enzyme 6.